The following is a 283-amino-acid chain: ATP phosphoribosyltransferase (283 aa).

This sequence belongs to the ATP phosphoribosyltransferase family. Long subfamily. Mg(2+) serves as cofactor.

The protein localises to the cytoplasm. It catalyses the reaction 1-(5-phospho-beta-D-ribosyl)-ATP + diphosphate = 5-phospho-alpha-D-ribose 1-diphosphate + ATP. It functions in the pathway amino-acid biosynthesis; L-histidine biosynthesis; L-histidine from 5-phospho-alpha-D-ribose 1-diphosphate: step 1/9. With respect to regulation, feedback inhibited by histidine. Functionally, catalyzes the condensation of ATP and 5-phosphoribose 1-diphosphate to form N'-(5'-phosphoribosyl)-ATP (PR-ATP). Has a crucial role in the pathway because the rate of histidine biosynthesis seems to be controlled primarily by regulation of HisG enzymatic activity. This is ATP phosphoribosyltransferase from Bifidobacterium longum (strain DJO10A).